A 458-amino-acid chain; its full sequence is Argininosuccinate lyase (458 aa).

This sequence belongs to the lyase 1 family. Argininosuccinate lyase subfamily.

It is found in the cytoplasm. The enzyme catalyses 2-(N(omega)-L-arginino)succinate = fumarate + L-arginine. It functions in the pathway amino-acid biosynthesis; L-arginine biosynthesis; L-arginine from L-ornithine and carbamoyl phosphate: step 3/3. The protein is Argininosuccinate lyase of Pelobacter propionicus (strain DSM 2379 / NBRC 103807 / OttBd1).